The chain runs to 1409 residues: Inositol hexakisphosphate and diphosphoinositol-pentakisphosphate kinase 1 (1409 aa).

64 to 65 is a substrate binding site; sequence KK. ATP-binding positions include R145, K198, H205, R224, 248-251, and 257-259; these read EEFM and DVK. A substrate-binding site is contributed by 224–225; the sequence is RK. Residues K259 and R273 each coordinate substrate. ATP-binding positions include S275, D320, and 332 to 334; that span reads DVN. Substrate is bound at residue 337–340; the sequence is SFVK. The tract at residues 382–453 is polyphosphoinositide-binding domain; that stretch reads PTTSGTMMEL…VLDITRLLLA (72 aa). Positions 891 to 996 are disordered; that stretch reads GVEEEGSAPA…PTEMKQSGLG (106 aa). Phosphoserine occurs at positions 920 and 963. The segment covering 981–996 has biased composition (polar residues); it reads FSSSRPPTEMKQSGLG. 2 positions are modified to phosphoserine: S1013 and S1049. The span at 1110 to 1119 shows a compositional bias: polar residues; sequence MHSSQASDNP. The interval 1110-1183 is disordered; the sequence is MHSSQASDNP…PSLNSHVAEE (74 aa). S1121 and S1128 each carry phosphoserine. A compositionally biased stretch (low complexity) spans 1144–1162; that stretch reads SSGPSSTVSSAGPSSPTTV. Over residues 1163 to 1178 the composition is skewed to polar residues; sequence DGNSQFGFSDQPSLNS.

This sequence belongs to the histidine acid phosphatase family. VIP1 subfamily.

It is found in the cytoplasm. The protein localises to the cytosol. The protein resides in the cell membrane. The enzyme catalyses 1D-myo-inositol hexakisphosphate + ATP = 1-diphospho-1D-myo-inositol 2,3,4,5,6-pentakisphosphate + ADP. The catalysed reaction is 5-diphospho-1D-myo-inositol 1,2,3,4,6-pentakisphosphate + ATP + H(+) = 1,5-bis(diphospho)-1D-myo-inositol 2,3,4,6-tetrakisphosphate + ADP. In terms of biological role, bifunctional inositol kinase that acts in concert with the IP6K kinases IP6K1, IP6K2 and IP6K3 to synthesize the diphosphate group-containing inositol pyrophosphates diphosphoinositol pentakisphosphate, PP-InsP5, and bis-diphosphoinositol tetrakisphosphate, (PP)2-InsP4. PP-InsP5 and (PP)2-InsP4, also respectively called InsP7 and InsP8, regulate a variety of cellular processes, including apoptosis, vesicle trafficking, cytoskeletal dynamics, exocytosis, insulin signaling and neutrophil activation. Phosphorylates inositol hexakisphosphate (InsP6) at position 1 to produce PP-InsP5 which is in turn phosphorylated by IP6Ks to produce (PP)2-InsP4. Alternatively, phosphorylates PP-InsP5 at position 1, produced by IP6Ks from InsP6, to produce (PP)2-InsP4. Activated when cells are exposed to hyperosmotic stress. The sequence is that of Inositol hexakisphosphate and diphosphoinositol-pentakisphosphate kinase 1 from Pongo abelii (Sumatran orangutan).